Consider the following 63-residue polypeptide: Large ribosomal subunit protein uL30 (63 aa).

Belongs to the universal ribosomal protein uL30 family. As to quaternary structure, part of the 50S ribosomal subunit.

In Rickettsia massiliae (strain Mtu5), this protein is Large ribosomal subunit protein uL30.